Reading from the N-terminus, the 346-residue chain is Structure-specific endonuclease subunit SLX1 (346 aa).

The region spanning 10-92 (ALYCVYILRS…TNPHTSLHIP (83 aa)) is the GIY-YIG domain. The SLX1-type zinc-finger motif lies at 238 to 296 (CVVCKEEIDPEEGGLHAVCSNEGCEGVGHLRCWGRYLLKSEEGGGEGAILPVGGRCPRC). Residues 324–336 (KVKRKRAPRKKTA) show a composition bias toward basic residues. The tract at residues 324–346 (KVKRKRAPRKKTAKTKETREEDG) is disordered. A compositionally biased stretch (basic and acidic residues) spans 337–346 (KTKETREEDG).

This sequence belongs to the SLX1 family. As to quaternary structure, forms a heterodimer with SLX4. The cofactor is a divalent metal cation.

The protein localises to the nucleus. Its function is as follows. Catalytic subunit of the SLX1-SLX4 structure-specific endonuclease that resolves DNA secondary structures generated during DNA repair and recombination. Has endonuclease activity towards branched DNA substrates, introducing single-strand cuts in duplex DNA close to junctions with ss-DNA. In Podospora anserina (strain S / ATCC MYA-4624 / DSM 980 / FGSC 10383) (Pleurage anserina), this protein is Structure-specific endonuclease subunit SLX1.